The primary structure comprises 887 residues: Kinesin-like protein KIF20A (887 aa).

Ser2 carries the N-acetylserine modification. Ser7, Ser14, and Ser21 each carry phosphoserine. In terms of domain architecture, Kinesin motor spans 63–506 (KVKVYLRIRP…AKFSALASQL (444 aa)). 159–166 (GVTNSGKT) serves as a coordination point for ATP. Residue Ser527 is modified to Phosphoserine; by PLK1. Positions 527-553 (SPQVGPGLEKEDKADSDLEDSPEDEAD) are disordered. Residues 543–553 (DLEDSPEDEAD) show a composition bias toward acidic residues. Residues 559–804 (KEELLQVVEA…VLVKLDLQKK (246 aa)) are a coiled coil. A phosphoserine mark is found at Ser683 and Ser823. A globular region spans residues 805–887 (AACIAEQYHT…LLKSPFGKKY (83 aa)). Residues 826–875 (KRLGANQENQQPNHQPPGKKPFLRNLLPRTPTCQSSTDSSPYARILRSRH) form a disordered region. Thr855 is modified (phosphothreonine). A compositionally biased stretch (polar residues) spans 856–865 (PTCQSSTDSS). 3 positions are modified to phosphoserine: Ser865, Ser876, and Ser881.

Belongs to the TRAFAC class myosin-kinesin ATPase superfamily. Kinesin family. Post-translationally, phosphorylated by PLK1 at Ser-527 during mitosis, creating a docking site for PLK1 and recruiting PLK1 at central spindle. As to expression, ubiquitously expressed, with highest levels in spleen and testis.

It is found in the golgi apparatus. Its subcellular location is the cytoplasm. The protein resides in the cytoskeleton. It localises to the spindle. Functionally, mitotic kinesin required for chromosome passenger complex (CPC)-mediated cytokinesis. Following phosphorylation by PLK1, involved in recruitment of PLK1 to the central spindle. Interacts with guanosine triphosphate (GTP)-bound forms of RAB6A and RAB6B. May act as a motor required for the retrograde RAB6 regulated transport of Golgi membranes and associated vesicles along microtubules. Has a microtubule plus end-directed motility. The chain is Kinesin-like protein KIF20A (Kif20a) from Mus musculus (Mouse).